A 645-amino-acid chain; its full sequence is MNQMQPYADVHQPHMSTAAHAPASGPPAGLSHYSYPHQPSMMQPQQQQHQYGGQPTGYPYAYNNGVPSQLPASSSMNNALVPSTLQLPAMSAGAPNSSMPGSQSYQSHTFDHTGQVAPPGMKPRVTATLWEDEGSLCFQVEAKGVCVARREDNHMINGTKLLNVAGMTRGRRDGILKSEKTRHVVKIGPMHLKGVWIPFERALEFANKEKITEQLYPLFVHDIGALLYHPSNQTRASVGGAAMAAVDRNRRPDSMQTQQRYMAGPTTSQAPSLHHHHSMTNSVGSAMSQPPHAIQPHPSSGRPSLDRAHTFPTPPTSASSMMGMGNQGSSYEWNGANVQQHPQGNQPLSIDTGLSNARSVPTTPASTPPGAVQQGIPYGSSQSYDGSRPMYSAPPAQPSQYAQGQPMMSYRPDNAYPKTEMAPPSRISDVPEEGEVKASDGMMPQGNEQVAAPPAGGEEENEYTHSSAPYNGNRGPYGYNPNGPPGPMHADHTHLSPEMTGSPHQNGSGRATPRTATNGQAQWGSSYPTPQRQAPPSSNLYNVMSDPRGAPNGNAAHDAYQGPGAVPQYASQGYAPTNGVNSSGKRGRDEEDAETYRPDSVQGDDMGGLKRRKTMEGGAVGQTYAQDPSPGLQRAHTLAAQRARR.

Residues 1–52 (MNQMQPYADVHQPHMSTAAHAPASGPPAGLSHYSYPHQPSMMQPQQQQHQYG) are disordered. Low complexity predominate over residues 18–52 (AAHAPASGPPAGLSHYSYPHQPSMMQPQQQQHQYG). The HTH APSES-type domain maps to 124–230 (RVTATLWEDE…HDIGALLYHP (107 aa)). Residues 158 to 179 (GTKLLNVAGMTRGRRDGILKSE) constitute a DNA-binding region (H-T-H motif). The tract at residues 246–645 (VDRNRRPDSM…HTLAAQRARR (400 aa)) is disordered. Composition is skewed to polar residues over residues 254–271 (SMQTQQRYMAGPTTSQAP) and 279–288 (MTNSVGSAMS). Positions 317–330 (SASSMMGMGNQGSS) are enriched in low complexity. A compositionally biased stretch (polar residues) spans 336 to 365 (ANVQQHPQGNQPLSIDTGLSNARSVPTTPA). The segment covering 469–481 (PYNGNRGPYGYNP) has biased composition (low complexity). 2 stretches are compositionally biased toward polar residues: residues 502–542 (SPHQ…NLYN) and 569–584 (YASQGYAPTNGVNSSG). The tract at residues 585 to 613 (KRGRDEEDAETYRPDSVQGDDMGGLKRRK) is nuclear localization domain. The segment covering 586-597 (RGRDEEDAETYR) has biased composition (basic and acidic residues).

It belongs to the EFG1/PHD1/stuA family.

The protein localises to the nucleus. Its function is as follows. Transcription factor that regulates asexual reproduction. Binds the StuA-response elements (StRE) with the consensus sequence 5'-(A/T)CGCG(T/A)N(A/C)-3' at the promoters of target genes. Regulates the expression of several effector genes (AvrLm1, AvrLm6 and AvrLm4-7) during infection stage. The chain is Cell pattern formation-associated protein stuA from Leptosphaeria maculans (strain JN3 / isolate v23.1.3 / race Av1-4-5-6-7-8) (Blackleg fungus).